We begin with the raw amino-acid sequence, 568 residues long: 2-succinyl-5-enolpyruvyl-6-hydroxy-3-cyclohexene-1-carboxylate synthase (568 aa).

Belongs to the TPP enzyme family. MenD subfamily. As to quaternary structure, homodimer. Mg(2+) is required as a cofactor. The cofactor is Mn(2+). Thiamine diphosphate serves as cofactor.

It catalyses the reaction isochorismate + 2-oxoglutarate + H(+) = 5-enolpyruvoyl-6-hydroxy-2-succinyl-cyclohex-3-ene-1-carboxylate + CO2. It participates in quinol/quinone metabolism; 1,4-dihydroxy-2-naphthoate biosynthesis; 1,4-dihydroxy-2-naphthoate from chorismate: step 2/7. Its pathway is quinol/quinone metabolism; menaquinone biosynthesis. In terms of biological role, catalyzes the thiamine diphosphate-dependent decarboxylation of 2-oxoglutarate and the subsequent addition of the resulting succinic semialdehyde-thiamine pyrophosphate anion to isochorismate to yield 2-succinyl-5-enolpyruvyl-6-hydroxy-3-cyclohexene-1-carboxylate (SEPHCHC). This chain is 2-succinyl-5-enolpyruvyl-6-hydroxy-3-cyclohexene-1-carboxylate synthase, found in Actinobacillus pleuropneumoniae serotype 7 (strain AP76).